The chain runs to 350 residues: Biotin synthase (350 aa).

The Radical SAM core domain maps to 38 to 265 (NHVQVSTLLS…MSAVRLSAGR (228 aa)). The [4Fe-4S] cluster site is built by Cys-53, Cys-57, and Cys-60. Positions 97, 128, 188, and 260 each coordinate [2Fe-2S] cluster.

Belongs to the radical SAM superfamily. Biotin synthase family. As to quaternary structure, homodimer. [4Fe-4S] cluster serves as cofactor. [2Fe-2S] cluster is required as a cofactor.

It carries out the reaction (4R,5S)-dethiobiotin + (sulfur carrier)-SH + 2 reduced [2Fe-2S]-[ferredoxin] + 2 S-adenosyl-L-methionine = (sulfur carrier)-H + biotin + 2 5'-deoxyadenosine + 2 L-methionine + 2 oxidized [2Fe-2S]-[ferredoxin]. The protein operates within cofactor biosynthesis; biotin biosynthesis; biotin from 7,8-diaminononanoate: step 2/2. Its function is as follows. Catalyzes the conversion of dethiobiotin (DTB) to biotin by the insertion of a sulfur atom into dethiobiotin via a radical-based mechanism. The polypeptide is Biotin synthase (Vibrio atlanticus (strain LGP32) (Vibrio splendidus (strain Mel32))).